A 787-amino-acid polypeptide reads, in one-letter code: ATP-dependent zinc metalloprotease FtsH (787 aa).

Residues 1–5 are Cytoplasmic-facing; it reads MNRKN. The chain crosses the membrane as a helical span at residues 6–26; the sequence is VIRMVTAIAVVVLLGWSFFYF. Topologically, residues 27–110 are extracellular; the sequence is SDDTRGYKFV…KVTTAVNEGS (84 aa). A helical transmembrane segment spans residues 111 to 131; sequence ILGELLVYVLPLLLLVGLFVM. At 132-787 the chain is on the cytoplasmic side; that stretch reads FSRMQGGARM…VSPSNPPAHG (656 aa). 203-210 contributes to the ATP binding site; that stretch reads GPPGTGKT. His425 lines the Zn(2+) pocket. Glu426 is a catalytic residue. His429 and Asp501 together coordinate Zn(2+). A disordered region spans residues 616-787; that stretch reads DFGGRIPSDK…VSPSNPPAHG (172 aa). Composition is skewed to low complexity over residues 650–671 and 700–709; these read AFKA…AAQS and YGAPPGWHAP. The span at 710–720 shows a compositional bias: pro residues; the sequence is GWPPQQPPDYW. A compositionally biased stretch (low complexity) spans 721-732; that stretch reads YPPEQQPSQSPY. The span at 733–762 shows a compositional bias: pro residues; the sequence is WPQPAPSYPGQAPPPYPSYPPCPSYPPPGQ.

It in the central section; belongs to the AAA ATPase family. This sequence in the C-terminal section; belongs to the peptidase M41 family. As to quaternary structure, homohexamer. Requires Zn(2+) as cofactor.

It localises to the cell membrane. Functionally, acts as a processive, ATP-dependent zinc metallopeptidase for both cytoplasmic and membrane proteins. Plays a role in the quality control of integral membrane proteins. The protein is ATP-dependent zinc metalloprotease FtsH of Mycobacterium leprae (strain TN).